The primary structure comprises 206 residues: Thymidylate kinase (206 aa).

7 to 14 serves as a coordination point for ATP; the sequence is GGEGVGKT.

Belongs to the thymidylate kinase family.

The catalysed reaction is dTMP + ATP = dTDP + ADP. Phosphorylation of dTMP to form dTDP in both de novo and salvage pathways of dTTP synthesis. In Synechococcus sp. (strain JA-2-3B'a(2-13)) (Cyanobacteria bacterium Yellowstone B-Prime), this protein is Thymidylate kinase.